We begin with the raw amino-acid sequence, 294 residues long: 4-hydroxy-tetrahydrodipicolinate synthase (294 aa).

A pyruvate-binding site is contributed by Thr-47. Tyr-135 (proton donor/acceptor) is an active-site residue. Lys-163 (schiff-base intermediate with substrate) is an active-site residue. Thr-205 lines the pyruvate pocket.

It belongs to the DapA family. In terms of assembly, homotetramer; dimer of dimers.

Its subcellular location is the cytoplasm. It catalyses the reaction L-aspartate 4-semialdehyde + pyruvate = (2S,4S)-4-hydroxy-2,3,4,5-tetrahydrodipicolinate + H2O + H(+). It participates in amino-acid biosynthesis; L-lysine biosynthesis via DAP pathway; (S)-tetrahydrodipicolinate from L-aspartate: step 3/4. Catalyzes the condensation of (S)-aspartate-beta-semialdehyde [(S)-ASA] and pyruvate to 4-hydroxy-tetrahydrodipicolinate (HTPA). The polypeptide is 4-hydroxy-tetrahydrodipicolinate synthase (Rickettsia peacockii (strain Rustic)).